We begin with the raw amino-acid sequence, 298 residues long: Glutamyl-Q tRNA(Asp) synthetase (298 aa).

Residues 8–12 (RFAPS) and glutamate 44 contribute to the L-glutamate site. Positions 11–21 (PSPTGPLHFGS) match the 'HIGH' region motif. Residues cysteine 100, cysteine 102, tyrosine 123, and cysteine 127 each coordinate Zn(2+). L-glutamate is bound by residues tyrosine 183 and arginine 201. The 'KMSKS' region signature appears at 239 to 243 (KLSKQ). Lysine 242 is an ATP binding site.

It belongs to the class-I aminoacyl-tRNA synthetase family. GluQ subfamily. Zn(2+) serves as cofactor.

In terms of biological role, catalyzes the tRNA-independent activation of glutamate in presence of ATP and the subsequent transfer of glutamate onto a tRNA(Asp). Glutamate is transferred on the 2-amino-5-(4,5-dihydroxy-2-cyclopenten-1-yl) moiety of the queuosine in the wobble position of the QUC anticodon. The sequence is that of Glutamyl-Q tRNA(Asp) synthetase from Burkholderia orbicola (strain MC0-3).